The chain runs to 479 residues: Anaerobic nitric oxide reductase flavorubredoxin (479 aa).

The zinc metallo-hydrolase stretch occupies residues 30-210; it reads LRGSSYNSYL…PFSRLVTPKI (181 aa). Residues His-79, Glu-81, Asp-83, His-147, Asp-166, and His-227 each contribute to the Fe cation site. A Flavodoxin-like domain is found at 254–393; the sequence is ITIFYDTMSN…LCREHGREIA (140 aa). FMN is bound by residues 260–264 and 342–369; these read TMSNN and AFGSHGWSGGAVDRLSTRLQDAGFEMSL. Residues 423 to 479 enclose the Rubredoxin-like domain; the sequence is GPRMQCSVCQWIYDPAKGEPMQDVAPGTPWSEVPDNFLCPECSLGKDVFEELASEAK. Residues Cys-428, Cys-431, Cys-461, and Cys-464 each contribute to the Fe cation site.

This sequence in the N-terminal section; belongs to the zinc metallo-hydrolase group 3 family. Homotetramer. Fe cation serves as cofactor. Requires FMN as cofactor.

Its subcellular location is the cytoplasm. It functions in the pathway nitrogen metabolism; nitric oxide reduction. Anaerobic nitric oxide reductase; uses NADH to detoxify nitric oxide (NO), protecting several 4Fe-4S NO-sensitive enzymes. Has at least 2 reductase partners, only one of which (NorW, flavorubredoxin reductase) has been identified. NO probably binds to the di-iron center; electrons enter from the reductase at rubredoxin and are transferred sequentially to the FMN center and the di-iron center. Also able to function as an aerobic oxygen reductase. This is Anaerobic nitric oxide reductase flavorubredoxin (norV) from Escherichia coli (strain K12 / DH10B).